Consider the following 522-residue polypeptide: E3 ubiquitin-protein ligase DMA2 (522 aa).

Disordered stretches follow at residues 1-56 (MYTP…RPAS) and 69-92 (QNSQ…PSNS). Over residues 14 to 35 (APTSSMTSNSSSASNANTTSSS) the composition is skewed to low complexity. A compositionally biased stretch (polar residues) spans 36–49 (GINPRNRASGTPSN). S206 is modified (phosphoserine). Residues K211, K256, K258, K288, K310, K333, K343, K346, K366, K406, K412, and K423 each participate in a glycyl lysine isopeptide (Lys-Gly) (interchain with G-Cter in ubiquitin) cross-link. The 64-residue stretch at 295–358 (LVIGRYTERV…SGTFLNHQRL (64 aa)) folds into the FHA domain. The RING-type; atypical zinc finger occupies 433–477 (CSICLCKIKPCQAIFISPCAHSWHFRCVRRLVMLSYPQFVCPNCR).

The protein belongs to the DMA1 family. In terms of processing, UBC4-dependent autoubiquitination occurs at Lys-211, Lys-258, Lys-288, Lys-310, Lys-333, Lys-343, Lys-346, Lys-366, Lys-406, Lys-412 and Lys-423. UBC13/MMS2-dependent autoubiquitination occurs at Lys-258, Lys-310, Lys-346 and Lys-366. Lys-211, Lys-256, Lys-288, Lys-310, Lys-343, Lys-258, Lys-366 and Lys-412 are also ubiquitinated in trans by DMA1 E3 ligase in association with UBC4.

Its subcellular location is the cytoplasm. It catalyses the reaction S-ubiquitinyl-[E2 ubiquitin-conjugating enzyme]-L-cysteine + [acceptor protein]-L-lysine = [E2 ubiquitin-conjugating enzyme]-L-cysteine + N(6)-ubiquitinyl-[acceptor protein]-L-lysine.. E3 ubiquitin-protein ligase which functions in cell cycle retarding in conjunction with the UBC4 and UBC13/MMS2 complex, 2 E2 ubiquitin conjugating enzymes. Involved in nutritional control of the cell cycle. Required for proper spindle positioning, likely regulating septin ring deposition at the bud neck. This chain is E3 ubiquitin-protein ligase DMA2 (DMA2), found in Saccharomyces cerevisiae (strain YJM789) (Baker's yeast).